A 201-amino-acid chain; its full sequence is B-cell CLL/lymphoma 7 protein family member B-B (201 aa).

Residues 104–201 are disordered; sequence QSNTKVDSSS…VCTEHNSTVS (98 aa).

Belongs to the BCL7 family.

This is B-cell CLL/lymphoma 7 protein family member B-B from Danio rerio (Zebrafish).